We begin with the raw amino-acid sequence, 350 residues long: Probable dual-specificity RNA methyltransferase RlmN (350 aa).

Glu-98 acts as the Proton acceptor in catalysis. The Radical SAM core domain occupies 104–334 (HTYGNSVCVS…VTVRRELGGD (231 aa)). Cysteines 111 and 339 form a disulfide. [4Fe-4S] cluster-binding residues include Cys-118, Cys-122, and Cys-125. Residues 165–166 (GE), Ser-197, 220–222 (SLH), and Asn-296 contribute to the S-adenosyl-L-methionine site. The active-site S-methylcysteine intermediate is Cys-339.

The protein belongs to the radical SAM superfamily. RlmN family. It depends on [4Fe-4S] cluster as a cofactor.

It is found in the cytoplasm. The enzyme catalyses adenosine(2503) in 23S rRNA + 2 reduced [2Fe-2S]-[ferredoxin] + 2 S-adenosyl-L-methionine = 2-methyladenosine(2503) in 23S rRNA + 5'-deoxyadenosine + L-methionine + 2 oxidized [2Fe-2S]-[ferredoxin] + S-adenosyl-L-homocysteine. It carries out the reaction adenosine(37) in tRNA + 2 reduced [2Fe-2S]-[ferredoxin] + 2 S-adenosyl-L-methionine = 2-methyladenosine(37) in tRNA + 5'-deoxyadenosine + L-methionine + 2 oxidized [2Fe-2S]-[ferredoxin] + S-adenosyl-L-homocysteine. Specifically methylates position 2 of adenine 2503 in 23S rRNA and position 2 of adenine 37 in tRNAs. In Desulforamulus reducens (strain ATCC BAA-1160 / DSM 100696 / MI-1) (Desulfotomaculum reducens), this protein is Probable dual-specificity RNA methyltransferase RlmN.